Here is a 179-residue protein sequence, read N- to C-terminus: Large ribosomal subunit protein uL6 (179 aa).

It belongs to the universal ribosomal protein uL6 family. In terms of assembly, part of the 50S ribosomal subunit.

Its function is as follows. This protein binds to the 23S rRNA, and is important in its secondary structure. It is located near the subunit interface in the base of the L7/L12 stalk, and near the tRNA binding site of the peptidyltransferase center. The polypeptide is Large ribosomal subunit protein uL6 (Chlorobium limicola (strain DSM 245 / NBRC 103803 / 6330)).